Consider the following 204-residue polypeptide: Rho GDP-dissociation inhibitor 1 (204 aa).

Positions 1–36 (MAEQEPTAEQLAQIAAENEEDEHSVNYKPPAQKSIQ) are disordered. Alanine 2 is subject to N-acetylalanine. Residue serine 34 is modified to Phosphoserine. Lysine 43 carries the N6-acetyllysine modification. At serine 47 the chain carries Phosphoserine. The tract at residues 66–83 (NVPNVVVTRLTLVCSTAP) is hydrophobic. At serine 101 the chain carries Phosphoserine; by PKA. Lysine 105 is subject to N6-acetyllysine. Serine 115 is modified (phosphoserine; by PKC). Lysine 127 carries the N6-acetyllysine modification. Glycyl lysine isopeptide (Lys-Gly) (interchain with G-Cter in SUMO1); alternate cross-links involve residues lysine 138 and lysine 141. Glycyl lysine isopeptide (Lys-Gly) (interchain with G-Cter in SUMO2); alternate cross-links involve residues lysine 138 and lysine 141. Lysine 141 carries the post-translational modification N6-acetyllysine; alternate. Residue lysine 141 is modified to N6-succinyllysine; alternate. Position 178 is an N6-acetyllysine (lysine 178).

Belongs to the Rho GDI family. Monomer. Interacts with FER. Interacts with PLXNB3. Forms a heterodimer with RAC1. Interacts with RHOA, the affinity is increased by three orders of magnitude when RHOA is prenylated. Interacts with PSMD10; the interaction increases ARHGDIA association with RHOA, leading to ARHGDIA-mediated inactivation of RHOA and ROCK and prolonged AKT activation. Interacts with KANK2; the interaction is direct and may regulate the interaction of ARHGDIA with RHOA, RAC1 and CDC42. Interacts with RHOC. Interacts with CDC42. Interacts with NGFR (via death domain); NGFR binding decreases the affinity for RHOA. Brain, lung, thymus, spleen, small intestine, and kidney, and weakly in heart and liver.

Its subcellular location is the cytoplasm. In terms of biological role, controls Rho proteins homeostasis. Regulates the GDP/GTP exchange reaction of the Rho proteins by inhibiting the dissociation of GDP from them, and the subsequent binding of GTP to them. Retains Rho proteins such as CDC42, RAC1 and RHOA in an inactive cytosolic pool, regulating their stability and protecting them from degradation. Actively involved in the recycling and distribution of activated Rho GTPases in the cell, mediates extraction from membranes of both inactive and activated molecules due its exceptionally high affinity for prenylated forms. Through the modulation of Rho proteins, may play a role in cell motility regulation. In glioma cells, inhibits cell migration and invasion by mediating the signals of SEMA5A and PLXNB3 that lead to inactivation of RAC1. The sequence is that of Rho GDP-dissociation inhibitor 1 (ARHGDIA) from Bos taurus (Bovine).